The sequence spans 532 residues: Flavin-containing monooxygenase 3 (532 aa).

FAD-binding positions include 9–13, glutamate 32, 40–41, and 61–62; these read GAGVS, LW, and NS. NADP(+) contacts are provided by residues 60-61 and 195-198; these read SN and SGCD. Serine 401 is modified (phosphoserine). The chain crosses the membrane as a helical span at residues 510–530; the sequence is FFFHWLKLFAIPILLIAVFLV.

This sequence belongs to the FMO family. FAD is required as a cofactor. As to expression, liver.

It is found in the microsome membrane. It localises to the endoplasmic reticulum membrane. The enzyme catalyses trimethylamine + NADPH + O2 = trimethylamine N-oxide + NADP(+) + H2O. It carries out the reaction N,N-dimethylaniline + NADPH + O2 + H(+) = N,N-dimethylaniline N-oxide + NADP(+) + H2O. The catalysed reaction is hypotaurine + NADPH + O2 + H(+) = taurine + NADP(+) + H2O. It catalyses the reaction (S)-nicotine + NADPH + O2 = trans-(S)-nicotine N(1')-oxide + NADP(+) + H2O. The enzyme catalyses albendazole + NADPH + O2 + H(+) = albendazole S-oxide + NADP(+) + H2O. Its function is as follows. Essential hepatic enzyme that catalyzes the oxygenation of a wide variety of nitrogen- and sulfur-containing compounds including drugs as well as dietary compounds. Plays an important role in the metabolism of trimethylamine (TMA), via the production of trimethylamine N-oxide (TMAO) metabolite. TMA is generated by the action of gut microbiota using dietary precursors such as choline, choline containing compounds, betaine or L-carnitine. By regulating TMAO concentration, FMO3 directly impacts both platelet responsiveness and rate of thrombus formation. The protein is Flavin-containing monooxygenase 3 (FMO3) of Homo sapiens (Human).